The primary structure comprises 826 residues: Elongator complex protein 2 (826 aa).

WD repeat units lie at residues 13 to 53 (CCPN…VVTN), 56 to 100 (GHTA…LLKA), 105 to 152 (GHEG…VMCL), 158 to 200 (GNGF…FQKV), 205 to 246 (GHED…TSLE), 281 to 329 (GHEN…GVWL), 339 to 378 (GNTL…PREW), 386 to 425 (GHFD…DQSQ), 436 to 474 (IHGY…VENF), 565 to 609 (GHGY…QVQN), 612 to 651 (FHSL…SPEF), 667 to 706 (VHSR…DDCI), 712 to 753 (PCSS…CLYT), and 777 to 826 (SHTL…KCAL).

This sequence belongs to the WD repeat ELP2 family. In terms of assembly, component of the elongator complex which consists of ELP1, ELP2, ELP3, ELP4, ELP5 and ELP6. Interacts with STAT3 and JAKs.

The protein resides in the cytoplasm. The protein localises to the nucleus. The protein operates within tRNA modification; 5-methoxycarbonylmethyl-2-thiouridine-tRNA biosynthesis. Component of the elongator complex which is required for multiple tRNA modifications, including mcm5U (5-methoxycarbonylmethyl uridine), mcm5s2U (5-methoxycarbonylmethyl-2-thiouridine), and ncm5U (5-carbamoylmethyl uridine). The elongator complex catalyzes the formation of carboxymethyluridine in the wobble base at position 34 in tRNAs. The polypeptide is Elongator complex protein 2 (ELP2) (Homo sapiens (Human)).